A 714-amino-acid polypeptide reads, in one-letter code: ATP-dependent RNA helicase MSS116, mitochondrial (714 aa).

A mitochondrion-targeting transit peptide spans 1-37 (MSWVRSVAIRTALCRQVRSRYQSYGSTRLFSSSLRSW). A Q motif motif is present at residues 74–102 (SLEASRKFDKSIFRGLYNSKMKNMTVVQQ). The Helicase ATP-binding domain occupies 106-296 (MPMMDTKTGV…HETIGKEYEY (191 aa)). 119–126 (AKTGTGKT) lines the ATP pocket. Positions 234-237 (DEAD) match the DEAD box motif. Residues 335-498 (HINDKYFKAI…TSPDHFQRLG (164 aa)) form the Helicase C-terminal domain. The tract at residues 581-714 (SSNDRKSKRT…TYGRRDDSDE (134 aa)) is disordered. Composition is skewed to basic and acidic residues over residues 619 to 640 (RSFD…DRKS), 656 to 671 (YGDK…DKSY), and 679 to 697 (SNDR…EKRN).

Belongs to the DEAD box helicase family. DDX18/HAS1 subfamily.

It is found in the mitochondrion matrix. It carries out the reaction ATP + H2O = ADP + phosphate + H(+). In terms of biological role, ATP-dependent RNA helicase required for mitochondrial splicing of group I and II introns. Also required for efficient mitochondrial translation. In Meyerozyma guilliermondii (strain ATCC 6260 / CBS 566 / DSM 6381 / JCM 1539 / NBRC 10279 / NRRL Y-324) (Yeast), this protein is ATP-dependent RNA helicase MSS116, mitochondrial (MSS116).